The following is a 185-amino-acid chain: Ribulose bisphosphate carboxylase small subunit, chloroplastic 2 (185 aa).

The N-terminal 45 residues, 1–45 (MAAVIAKSSVSAAVARPARSSVRPMAALKPAVKAAPVAAPAQANQ), are a transit peptide targeting the chloroplast. Methionine 46 is modified (N-methylmethionine).

It belongs to the RuBisCO small chain family. As to quaternary structure, heterohexadecamer of 8 large and 8 small subunits.

It localises to the plastid. Its subcellular location is the chloroplast. The protein resides in the chloroplast stroma. Its function is as follows. RuBisCO catalyzes two reactions: the carboxylation of D-ribulose 1,5-bisphosphate, the primary event in carbon dioxide fixation, as well as the oxidative fragmentation of the pentose substrate. Both reactions occur simultaneously and in competition at the same active site. Although the small subunit is not catalytic it is essential for maximal activity. In Chlamydomonas reinhardtii (Chlamydomonas smithii), this protein is Ribulose bisphosphate carboxylase small subunit, chloroplastic 2.